Reading from the N-terminus, the 258-residue chain is Cytochrome b-c1 complex subunit Rieske-1, mitochondrial (258 aa).

A mitochondrion-targeting transit peptide spans 1–46; that stretch reads WPVRSAAPSSSAFISANHFSSDDDSSSPRSISPSLASVFLHHTRGF. The Mitochondrial matrix segment spans residues 47–95; it reads SSNSVSPAHDMGLVPDLPPTVAAIKNPTSKIVYDEHNHERYPPGDPSKR. Residues 96–118 form a helical membrane-spanning segment; it reads AFAYFVLTGGRFVYASLMRLLIL. At 119–258 the chain is on the mitochondrial intermembrane side; that stretch reads KFVLSMSASK…FLEENKLLIG (140 aa). Residues 161-256 form the Rieske domain; the sequence is RRRTEDDISL…YSFLEENKLL (96 aa). [2Fe-2S] cluster-binding residues include Cys201, His203, Cys220, and His223. A disulfide bond links Cys206 and Cys222.

The protein belongs to the Rieske iron-sulfur protein family. As to quaternary structure, component of the ubiquinol-cytochrome c oxidoreductase (cytochrome b-c1 complex, complex III, CIII), a multisubunit enzyme composed of 3 respiratory subunits cytochrome b, cytochrome c1 and Rieske protein, 2 core protein subunits, and several low-molecular weight protein subunits. The complex exists as an obligatory dimer and forms supercomplexes (SCs) in the inner mitochondrial membrane with cytochrome c oxidase (complex IV, CIV). Requires [2Fe-2S] cluster as cofactor.

It is found in the mitochondrion inner membrane. The enzyme catalyses a quinol + 2 Fe(III)-[cytochrome c](out) = a quinone + 2 Fe(II)-[cytochrome c](out) + 2 H(+)(out). In terms of biological role, component of the ubiquinol-cytochrome c oxidoreductase, a multisubunit transmembrane complex that is part of the mitochondrial electron transport chain which drives oxidative phosphorylation. The respiratory chain contains 3 multisubunit complexes succinate dehydrogenase (complex II, CII), ubiquinol-cytochrome c oxidoreductase (cytochrome b-c1 complex, complex III, CIII) and cytochrome c oxidase (complex IV, CIV), that cooperate to transfer electrons derived from NADH and succinate to molecular oxygen, creating an electrochemical gradient over the inner membrane that drives transmembrane transport and the ATP synthase. The cytochrome b-c1 complex catalyzes electron transfer from ubiquinol to cytochrome c, linking this redox reaction to translocation of protons across the mitochondrial inner membrane, with protons being carried across the membrane as hydrogens on the quinol. In the process called Q cycle, 2 protons are consumed from the matrix, 4 protons are released into the intermembrane space and 2 electrons are passed to cytochrome c. The Rieske protein is a catalytic core subunit containing a [2Fe-2S] iron-sulfur cluster. It cycles between 2 conformational states during catalysis to transfer electrons from the quinol bound in the Q(0) site in cytochrome b to cytochrome c1. This chain is Cytochrome b-c1 complex subunit Rieske-1, mitochondrial, found in Nicotiana tabacum (Common tobacco).